Here is a 408-residue protein sequence, read N- to C-terminus: Peptidase T (408 aa).

His78 serves as a coordination point for Zn(2+). The active site involves Asp80. Asp141 lines the Zn(2+) pocket. Glu175 functions as the Proton acceptor in the catalytic mechanism. Zn(2+)-binding residues include Glu176, Asp198, and His380.

The protein belongs to the peptidase M20B family. Zn(2+) serves as cofactor.

It localises to the cytoplasm. It carries out the reaction Release of the N-terminal residue from a tripeptide.. Its function is as follows. Cleaves the N-terminal amino acid of tripeptides. The sequence is that of Peptidase T from Clostridium botulinum (strain 657 / Type Ba4).